Reading from the N-terminus, the 258-residue chain is Imidazole glycerol phosphate synthase subunit HisF (258 aa).

Catalysis depends on residues D11 and D130.

The protein belongs to the HisA/HisF family. As to quaternary structure, heterodimer of HisH and HisF.

The protein localises to the cytoplasm. The enzyme catalyses 5-[(5-phospho-1-deoxy-D-ribulos-1-ylimino)methylamino]-1-(5-phospho-beta-D-ribosyl)imidazole-4-carboxamide + L-glutamine = D-erythro-1-(imidazol-4-yl)glycerol 3-phosphate + 5-amino-1-(5-phospho-beta-D-ribosyl)imidazole-4-carboxamide + L-glutamate + H(+). It participates in amino-acid biosynthesis; L-histidine biosynthesis; L-histidine from 5-phospho-alpha-D-ribose 1-diphosphate: step 5/9. Its function is as follows. IGPS catalyzes the conversion of PRFAR and glutamine to IGP, AICAR and glutamate. The HisF subunit catalyzes the cyclization activity that produces IGP and AICAR from PRFAR using the ammonia provided by the HisH subunit. The protein is Imidazole glycerol phosphate synthase subunit HisF of Enterobacter sp. (strain 638).